The sequence spans 238 residues: Ribonuclease PH (238 aa).

Phosphate is bound by residues Arg-86 and 124–126; that span reads GTR.

This sequence belongs to the RNase PH family. As to quaternary structure, homohexameric ring arranged as a trimer of dimers.

It catalyses the reaction tRNA(n+1) + phosphate = tRNA(n) + a ribonucleoside 5'-diphosphate. In terms of biological role, phosphorolytic 3'-5' exoribonuclease that plays an important role in tRNA 3'-end maturation. Removes nucleotide residues following the 3'-CCA terminus of tRNAs; can also add nucleotides to the ends of RNA molecules by using nucleoside diphosphates as substrates, but this may not be physiologically important. Probably plays a role in initiation of 16S rRNA degradation (leading to ribosome degradation) during starvation. This chain is Ribonuclease PH, found in Brucella melitensis biotype 2 (strain ATCC 23457).